The chain runs to 179 residues: MRQGSIPGAHGRVRPLGLLGDPVLHARCAEVTDFGPELAALVEDLFATMYAAHGVGLAANQVGEAVRVFVYDCPDDEDERHLGHVVNPRLVETGGVVVRGPEGCLSLPGLEAGTERYDEAVVTGFTVAGEPVTVRGTGFFARCLQHECDHLEGRVYADRLTGRRHRKLMRQVARASWHR.

Cysteine 104 and histidine 146 together coordinate Fe cation. Glutamate 147 is an active-site residue. Histidine 150 provides a ligand contact to Fe cation.

It belongs to the polypeptide deformylase family. Fe(2+) serves as cofactor.

The enzyme catalyses N-terminal N-formyl-L-methionyl-[peptide] + H2O = N-terminal L-methionyl-[peptide] + formate. Its function is as follows. Removes the formyl group from the N-terminal Met of newly synthesized proteins. Requires at least a dipeptide for an efficient rate of reaction. N-terminal L-methionine is a prerequisite for activity but the enzyme has broad specificity at other positions. The sequence is that of Peptide deformylase 2 from Streptomyces coelicolor (strain ATCC BAA-471 / A3(2) / M145).